The primary structure comprises 365 residues: MTRKYLMIAAGGTGGHMFPAQALAEAMLRKGWRVRLSTDARGARYTGGFPHTTEISQVSSATFARGGILAKAMVAPRIAAGIAATAWEMRRDRPDVVVGFGGYPSIPALGAATLLRLPRMIHEQNGVLGRVNQLFARRVACVACGVWPTDLPEGAQGVHVGNPVRAAVLERAGAAYIPPGPYPMSILVMGGSQGARILSDVVPGAIAALPEELRQYIRVAHQARDEDGARVTEFYAAHGIDAEVQPFFHDVPRRMSEAQLVISRAGASSVADISVIGRPSILIPFAAATGDHQTANARALTGANAAILIPERALDSAALAEQIAAVLTHPDAALQMANAALSTGAPDATERLVGLVEQLAEKETP.

UDP-N-acetyl-alpha-D-glucosamine-binding positions include 13–15 (TGG), Asn-125, Arg-165, Ser-192, and Gln-293.

This sequence belongs to the glycosyltransferase 28 family. MurG subfamily.

The protein localises to the cell inner membrane. The enzyme catalyses di-trans,octa-cis-undecaprenyl diphospho-N-acetyl-alpha-D-muramoyl-L-alanyl-D-glutamyl-meso-2,6-diaminopimeloyl-D-alanyl-D-alanine + UDP-N-acetyl-alpha-D-glucosamine = di-trans,octa-cis-undecaprenyl diphospho-[N-acetyl-alpha-D-glucosaminyl-(1-&gt;4)]-N-acetyl-alpha-D-muramoyl-L-alanyl-D-glutamyl-meso-2,6-diaminopimeloyl-D-alanyl-D-alanine + UDP + H(+). Its pathway is cell wall biogenesis; peptidoglycan biosynthesis. Functionally, cell wall formation. Catalyzes the transfer of a GlcNAc subunit on undecaprenyl-pyrophosphoryl-MurNAc-pentapeptide (lipid intermediate I) to form undecaprenyl-pyrophosphoryl-MurNAc-(pentapeptide)GlcNAc (lipid intermediate II). This chain is UDP-N-acetylglucosamine--N-acetylmuramyl-(pentapeptide) pyrophosphoryl-undecaprenol N-acetylglucosamine transferase, found in Ruegeria pomeroyi (strain ATCC 700808 / DSM 15171 / DSS-3) (Silicibacter pomeroyi).